Reading from the N-terminus, the 698-residue chain is UV radiation resistance-associated protein (698 aa).

Low complexity predominate over residues 1–10 (MSSCASLGGP). The interval 1–21 (MSSCASLGGPVPLPPPGPSAA) is disordered. One can recognise a C2 domain in the interval 23 to 149 (TSGAPARALH…YLGQQIHARN (127 aa)). The sufficient for interaction with STX7; VTI1B AND STX8 stretch occupies residues 199 to 268 (HRAQCAIKQT…REVAFLHKQQ (70 aa)). Residues 200–304 (RAQCAIKQTQ…LRKECTAKRE (105 aa)) adopt a coiled-coil conformation. A sufficient for interaction with VPS16, required for interaction with CEP63 region spans residues 269 to 441 (MALQDKGSAF…IAQLRYQHGL (173 aa)). The segment at 442-698 (GTPDLRQTLP…FRRPRRSSDK (257 aa)) is required for interaction with PRKDC, XRCC6 and XRCC5. Disordered regions lie at residues 477-551 (PKRQ…SSLD) and 565-586 (VDLG…EQGE). Ser492 is subject to Phosphoserine. Residue Ser497 is modified to Phosphoserine; by MTOR. The residue at position 507 (Ser507) is a Phosphoserine. A Phosphothreonine modification is found at Thr517. Ser521, Ser548, Ser549, Ser570, and Ser688 each carry phosphoserine.

In terms of assembly, component of the PI3K (PI3KC3/PI3K-III/class III phosphatidylinositol 3-kinase) complex II (PI3KC3-C2) in which the core composed of the catalytic subunit PIK3C3, the regulatory subunit PIK3R4 and BECN1 is associated with UVRAG; in the complex interacts directly with BECN1. PI3KC3-C2 can associate with further regulatory subunits such as RUBCN and probably SH3GLB1/Bif-1. Interacts with SH3GLB1; UVRAG bridges the interaction to BECN1 indicative for an association with the PI3K complex PI3KC3-C2. Interacts with RINT1. Associates with the NRZ complex under basal conditions and dissociates from it under autophagy conditions to associate with the PI3K complex; these complex associations seem to be mutually exclusive. Interacts with VPS16; VPS11; VPS18; VPS33 (VPS33A or VPS33B) and VPS39; indicative for an association with a class C Vps tethering complex (possibly the HOPS complex). Interacts with RAB7A; RAB7A competes with UVRAG for RUBCN binding. Interacts with STX7, VTI1B, STX8. Interacts with PRKDC, XRCC6 and XRCC5; indicative for an association with the DNA-dependent protein kinase complex DNA-PK. Interacts with CEP63. Directly interacts with FEZ1 and SCOC; the interaction with SCOC is reduced by amino acid starvation, but the complex is stabilized in the presence of FEZ1. Interacts with BECN1P1/BECN2. Interacts with SLAMF1. Interacts with RUBCNL/PACER; promoting targeting of UVRAG to autophagosome. Interacts with WNK1. Post-translationally, phosphorylated at Ser-497 by MTOR under basal conditions; increases the interaction with RUBCN implicated in inhibitory effect of RUBCN on PI3KC3 and decreases interaction with RAB7A, and VPS16 and VPS39 (indicative for a class C Vps complex, possibly the HOPS complex).

It localises to the late endosome. It is found in the lysosome. The protein localises to the cytoplasmic vesicle. Its subcellular location is the autophagosome. The protein resides in the early endosome. It localises to the endoplasmic reticulum. It is found in the midbody. The protein localises to the chromosome. Its subcellular location is the centromere. Versatile protein that is involved in regulation of different cellular pathways implicated in membrane trafficking. Involved in regulation of the COPI-dependent retrograde transport from Golgi and the endoplasmic reticulum by associating with the NRZ complex; the function is dependent on its binding to phosphatidylinositol 3-phosphate (PtdIns(3)P). During autophagy acts as a regulatory subunit of the alternative PI3K complex II (PI3KC3-C2) that mediates formation of phosphatidylinositol 3-phosphate and is believed to be involved in maturation of autophagosomes and endocytosis. Activates lipid kinase activity of PIK3C3. Involved in the regulation of degradative endocytic trafficking and cytokinesis, and in regulation of ATG9A transport from the Golgi to the autophagosome; the functions seems to implicate its association with PI3KC3-C2. Involved in maturation of autophagosomes and degradative endocytic trafficking independently of BECN1 but depending on its association with a class C Vps complex (possibly the HOPS complex); the association is also proposed to promote autophagosome recruitment and activation of Rab7 and endosome-endosome fusion events. Enhances class C Vps complex (possibly HOPS complex) association with a SNARE complex and promotes fusogenic SNARE complex formation during late endocytic membrane fusion. In case of negative-strand RNA virus infection is required for efficient virus entry, promotes endocytic transport of virions and is implicated in a VAMP8-specific fusogenic SNARE complex assembly. Functionally, involved in maintaining chromosomal stability. Promotes DNA double-strand break (DSB) repair by association with DNA-dependent protein kinase complex DNA-PK and activating it in non-homologous end joining (NHEJ). Required for centrosome stability and proper chromosome segregation. In Mus musculus (Mouse), this protein is UV radiation resistance-associated protein (Uvrag).